The sequence spans 109 residues: uncharacterized protein (109 aa).

The 59-residue stretch at 42-100 (LEEKLKQEKIDRKYLAEVTNIPYTTVSRIMRAEANREFNPEIDTILKIAKYFNCTMDEV) folds into the HTH cro/C1-type domain. Positions 53 to 72 (RKYLAEVTNIPYTTVSRIMR) form a DNA-binding region, H-T-H motif.

This is an uncharacterized protein from Rickettsia conorii (strain ATCC VR-613 / Malish 7).